Here is a 139-residue protein sequence, read N- to C-terminus: uncharacterized protein (139 aa).

The next 3 membrane-spanning stretches (helical) occupy residues 19–39 (CIIFMVIVGLGLLFAFQFILG), 64–84 (IFNVLVEHSYYGLLLSTFNLF), and 89–109 (AITIRLCFIFAISIVIFWILG).

The protein resides in the cell membrane. This is an uncharacterized protein from Methanocaldococcus jannaschii (strain ATCC 43067 / DSM 2661 / JAL-1 / JCM 10045 / NBRC 100440) (Methanococcus jannaschii).